We begin with the raw amino-acid sequence, 697 residues long: MAR-binding filament-like protein 1 (697 aa).

Residues 1-41 (MATSCFPPFSASSSSLCSSQFTPLLSCPRNTQICRKKRPVM) constitute a chloroplast transit peptide. The transit peptide at 42 to 79 (ASMHSENQKESNVCNRRSILFVGFSVLPLLNLRARALE) directs the protein to the thylakoid. The Lumenal, thylakoid portion of the chain corresponds to 80-106 (GLSTDSQAQPQKEETEQTIQGSAGNPF). The disordered stretch occupies residues 81-100 (LSTDSQAQPQKEETEQTIQG). The helical transmembrane segment at 107–127 (VSLLNGLGVVGSGVLGSLYAL) threads the bilayer. Topologically, residues 128-697 (ARNEKAVSDA…GEKEKVNVQQ (570 aa)) are stromal. Positions 203-671 (LQNEKKLAED…KGEILRLRSQ (469 aa)) form a coiled coil. The segment at 599-629 (TSRNSSLEDEREVHRQSVSEQKQISQEAQEN) is disordered. The span at 604–615 (SLEDEREVHRQS) shows a compositional bias: basic and acidic residues. Over residues 616–627 (VSEQKQISQEAQ) the composition is skewed to polar residues.

Interacts with MAF1. Interacts with PTST2; the interaction is essential for the initiation of starch granules biosynthesis in leaf chloroplasts, for the correct location of the process in the stromal spaces between the thylakoid membranes, and for the association of PTST2 with the thylakoid membranes. Phosphorylated in vitro by human casein kinase II. Post-translationally, predicted to be translocated into the thylakoid by the Tat system.

The protein localises to the plastid. The protein resides in the chloroplast. It is found in the chloroplast thylakoid membrane. Its subcellular location is the chloroplast stroma. It localises to the chloroplast nucleoid. The protein localises to the nucleus. The protein resides in the nucleus matrix. Its function is as follows. Required for the initiation of starch granules biosynthesis in leaf chloroplasts. Anchored to the thylakoid membranes with its C-terminus facing into the stroma where it is essential for localizing PTST2 and SS4 to the stromal spaces between the thylakoid membranes in order to begin starch granule formation. Associated with leaf chloroplastic nucleoids in vivo. Binds to various chloroplastic double-stranded DNA fragments without particular sequence specificity in vitro. May function at the interface between nucleoids and thylakoids possibly by anchoring nucleoids to the thylakoid membrane system in mature chloroplasts. Binds nuclear DNA. Interacts with chromatin via matrix attachment regions (MARs). Likely to participate in nuclear architecture by connecting chromatin with the nuclear matrix and potentially with the nuclear envelope. This Solanum lycopersicum (Tomato) protein is MAR-binding filament-like protein 1.